A 551-amino-acid polypeptide reads, in one-letter code: Probable 4-coumarate--CoA ligase 1 (551 aa).

ATP contacts are provided by Ser-205, Ser-206, Gly-207, Thr-208, Thr-209, and Lys-213. Tyr-253 contributes to the (E)-4-coumaroyl-AMP binding site. CoA is bound at residue Lys-274. The segment at 276-346 (EPVRFLELIQ…RFKGRLVIKQ (71 aa)) is SBD1. (E)-4-coumaroyl-AMP-binding residues include Ala-323, Gln-346, Gly-347, and Thr-351. ATP-binding residues include Gln-346, Gly-347, Thr-351, Asp-430, and Arg-445. Positions 347-409 (GYGATELSPA…IKGPNVMLGY (63 aa)) are SBD2. 2 residues coordinate (E)-4-coumaroyl-AMP: Lys-447 and Lys-451. Residues Lys-453 and Gly-454 each contribute to the CoA site. Lys-537 lines the ATP pocket.

The protein belongs to the ATP-dependent AMP-binding enzyme family. It depends on Mg(2+) as a cofactor.

The catalysed reaction is (E)-4-coumarate + ATP + CoA = (E)-4-coumaroyl-CoA + AMP + diphosphate. It catalyses the reaction (E)-4-coumarate + ATP + H(+) = (E)-4-coumaroyl-AMP + diphosphate. It carries out the reaction (E)-4-coumaroyl-AMP + CoA = (E)-4-coumaroyl-CoA + AMP + H(+). The protein operates within phytoalexin biosynthesis; 3,4',5-trihydroxystilbene biosynthesis; 3,4',5-trihydroxystilbene from trans-4-coumarate: step 1/2. Carboxylate--CoA ligase that may use 4-coumarate as substrate. Follows a two-step reaction mechanism, wherein the carboxylate substrate first undergoes adenylation by ATP, followed by a thioesterification in the presence of CoA to yield the final CoA thioester. This chain is Probable 4-coumarate--CoA ligase 1 (4cl1), found in Dictyostelium discoideum (Social amoeba).